The chain runs to 376 residues: uncharacterized protein (376 aa).

An N-terminal signal peptide occupies residues 1 to 28 (MCKPRVWRIAHTIVHVGALLLGTSQLTT). The N-palmitoyl cysteine moiety is linked to residue Cys-29. Residue Cys-29 is the site of S-diacylglycerol cysteine attachment.

Belongs to the TP013X lipoprotein family.

It localises to the cell membrane. This is an uncharacterized protein from Treponema pallidum (strain Nichols).